We begin with the raw amino-acid sequence, 267 residues long: Glucosamine-6-phosphate deaminase (267 aa).

Catalysis depends on D72, which acts as the Proton acceptor; for enolization step. D141 serves as the catalytic For ring-opening step. H143 acts as the Proton acceptor; for ring-opening step in catalysis. E148 functions as the For ring-opening step in the catalytic mechanism.

Belongs to the glucosamine/galactosamine-6-phosphate isomerase family. NagB subfamily. Homohexamer.

The enzyme catalyses alpha-D-glucosamine 6-phosphate + H2O = beta-D-fructose 6-phosphate + NH4(+). It participates in amino-sugar metabolism; N-acetylneuraminate degradation; D-fructose 6-phosphate from N-acetylneuraminate: step 5/5. Allosterically activated by N-acetylglucosamine 6-phosphate (GlcNAc6P). In terms of biological role, catalyzes the reversible isomerization-deamination of glucosamine 6-phosphate (GlcN6P) to form fructose 6-phosphate (Fru6P) and ammonium ion. The sequence is that of Glucosamine-6-phosphate deaminase from Mannheimia succiniciproducens (strain KCTC 0769BP / MBEL55E).